The chain runs to 760 residues: Xaa-Pro dipeptidyl-peptidase (760 aa).

Catalysis depends on charge relay system residues Ser349, Asp469, and His499.

The protein belongs to the peptidase S15 family. As to quaternary structure, homodimer.

Its subcellular location is the cytoplasm. It carries out the reaction Hydrolyzes Xaa-Pro-|- bonds to release unblocked, N-terminal dipeptides from substrates including Ala-Pro-|-p-nitroanilide and (sequentially) Tyr-Pro-|-Phe-Pro-|-Gly-Pro-|-Ile.. Functionally, removes N-terminal dipeptides sequentially from polypeptides having unsubstituted N-termini provided that the penultimate residue is proline. The protein is Xaa-Pro dipeptidyl-peptidase of Streptococcus pyogenes serotype M28 (strain MGAS6180).